Reading from the N-terminus, the 215-residue chain is A-type ATP synthase subunit E (215 aa).

This sequence belongs to the V-ATPase E subunit family. In terms of assembly, has multiple subunits with at least A(3), B(3), C, D, E, F, H, I and proteolipid K(x).

It is found in the cell membrane. Component of the A-type ATP synthase that produces ATP from ADP in the presence of a proton gradient across the membrane. In Thermofilum pendens (strain DSM 2475 / Hrk 5), this protein is A-type ATP synthase subunit E.